We begin with the raw amino-acid sequence, 369 residues long: Choline kinase B2 (369 aa).

It belongs to the choline/ethanolamine kinase family. Mg(2+) serves as cofactor.

The enzyme catalyses choline + ATP = phosphocholine + ADP + H(+). It participates in phospholipid metabolism; phosphatidylcholine biosynthesis; phosphocholine from choline: step 1/1. Its function is as follows. Catalyzes the first step in phosphatidylcholine biosynthesis. Phosphorylates choline. The sequence is that of Choline kinase B2 (ckb-2) from Caenorhabditis elegans.